We begin with the raw amino-acid sequence, 266 residues long: Shikimate dehydrogenase (NADP(+)) (266 aa).

Residues 14–16 (SLS) and Thr61 contribute to the shikimate site. Catalysis depends on Lys65, which acts as the Proton acceptor. Residues Asn85 and Asp100 each contribute to the shikimate site. NADP(+)-binding positions include 124-128 (GAGGA) and Ala210. Tyr212 is a shikimate binding site. Position 233 (Gly233) interacts with NADP(+).

This sequence belongs to the shikimate dehydrogenase family. In terms of assembly, homodimer.

It catalyses the reaction shikimate + NADP(+) = 3-dehydroshikimate + NADPH + H(+). Its pathway is metabolic intermediate biosynthesis; chorismate biosynthesis; chorismate from D-erythrose 4-phosphate and phosphoenolpyruvate: step 4/7. Functionally, involved in the biosynthesis of the chorismate, which leads to the biosynthesis of aromatic amino acids. Catalyzes the reversible NADPH linked reduction of 3-dehydroshikimate (DHSA) to yield shikimate (SA). The chain is Shikimate dehydrogenase (NADP(+)) from Halobacterium salinarum (strain ATCC 29341 / DSM 671 / R1).